We begin with the raw amino-acid sequence, 430 residues long: Histidine--tRNA ligase (430 aa).

It belongs to the class-II aminoacyl-tRNA synthetase family. In terms of assembly, homodimer.

It localises to the cytoplasm. The catalysed reaction is tRNA(His) + L-histidine + ATP = L-histidyl-tRNA(His) + AMP + diphosphate + H(+). The polypeptide is Histidine--tRNA ligase (Chlorobium luteolum (strain DSM 273 / BCRC 81028 / 2530) (Pelodictyon luteolum)).